A 788-amino-acid chain; its full sequence is Spastin (788 aa).

The segment at 1-105 (MVRTKNQSSS…PRSAGGPSSV (105 aa)) is disordered. Over 1–116 (MVRTKNQSSS…KQNLYVVSFP (116 aa)) the chain is Cytoplasmic. The segment at 1 to 227 (MVRTKNQSSS…NRSGSGYSPG (227 aa)) is required for localization to punctate cytoplasmic foci. Low complexity-rich tracts occupy residues 8–48 (SSSS…SSHR) and 57–75 (ATNV…SSPD). Residues 117–137 (IIFLFNVLRSLIYQLFCIFRY) constitute an intramembrane region (helical). Residues 138-788 (LYGASTKVIY…WSSDYGDITI (651 aa)) lie on the Cytoplasmic side of the membrane. Positions 227-788 (GPGDPLLAKQ…WSSDYGDITI (562 aa)) are sufficient for interaction with microtubules and microtubule severing. The MIT domain maps to 240–315 (HRRAFEYISK…SMARDRLHFL (76 aa)). A compositionally biased stretch (basic and acidic residues) spans 331–353 (EKQKANESREQQQKPQKAREAAD). The segment at 331–484 (EKQKANESRE…SGSGSGASTP (154 aa)) is disordered. Residues 387 to 400 (ATATTPTSSSSLAS) are compositionally biased toward low complexity. Polar residues-rich tracts occupy residues 419–433 (NKSQ…SKTS) and 453–469 (QFSS…RTPI). The segment at 471–485 (NNGASGSGSGASTPV) is required for interaction with microtubules. 553–560 (GPPGNGKT) provides a ligand contact to ATP.

This sequence belongs to the AAA ATPase family. Spastin subfamily. In terms of assembly, homohexamer. The homohexamer is stabilized by ATP-binding. The homohexamer may adopt a ring conformation through which microtubules pass prior to being severed. Interacts with microtubules. Interacts with atl; may be involved in microtubule dynamics.

It is found in the membrane. It localises to the cytoplasm. The protein resides in the cytoskeleton. The protein localises to the microtubule organizing center. Its subcellular location is the centrosome. It is found in the chromosome. It localises to the lipid droplet. The catalysed reaction is n ATP + n H2O + a microtubule = n ADP + n phosphate + (n+1) alpha/beta tubulin heterodimers.. In terms of biological role, ATP-dependent microtubule severing protein. Stimulates microtubule minus-end depolymerization and poleward microtubule flux in the mitotic spindle. Regulates microtubule stability in the neuromuscular junction synapse. Involved in lipid metabolism by regulating the size and distribution of lipid droplets. Involved in axon regeneration by regulating microtubule severing. This Drosophila persimilis (Fruit fly) protein is Spastin.